The sequence spans 196 residues: UMP-CMP kinase (196 aa).

13 to 18 lines the ATP pocket; it reads GAGKGT. The tract at residues 33-63 is NMP; sequence SAGDLLRDERKRPGSQYGELIENYIKEGEIV. Residues Arg39, 61–63, and 93–96 each bind a ribonucleoside 5'-phosphate; these read EIV and GFPR. Asn100 serves as a coordination point for CMP. The interval 133–143 is LID; sequence ERGKSSGRSDD. Arg134 serves as a coordination point for ATP. A ribonucleoside 5'-phosphate contacts are provided by Arg140 and Arg151. An ATP-binding site is contributed by Lys179.

It belongs to the adenylate kinase family. UMP-CMP kinase subfamily. As to quaternary structure, monomer. Mg(2+) serves as cofactor.

Its subcellular location is the nucleus. It localises to the cytoplasm. The enzyme catalyses CMP + ATP = CDP + ADP. It carries out the reaction dCMP + ATP = dCDP + ADP. The catalysed reaction is UMP + ATP = UDP + ADP. It catalyses the reaction a 2'-deoxyribonucleoside 5'-diphosphate + ATP = a 2'-deoxyribonucleoside 5'-triphosphate + ADP. The enzyme catalyses a ribonucleoside 5'-diphosphate + ATP = a ribonucleoside 5'-triphosphate + ADP. Functionally, catalyzes the phosphorylation of pyrimidine nucleoside monophosphates at the expense of ATP. Plays an important role in de novo pyrimidine nucleotide biosynthesis. Has preference for UMP and CMP as phosphate acceptors. Also displays broad nucleoside diphosphate kinase activity. This chain is UMP-CMP kinase (CMPK), found in Gallus gallus (Chicken).